A 128-amino-acid chain; its full sequence is Cytochrome c oxidase subunit 5B, mitochondrial (128 aa).

The transit peptide at Met-1–Asn-30 directs the protein to the mitochondrion. An N6-acetyllysine mark is found at Lys-67 and Lys-85. Zn(2+) contacts are provided by Cys-90, Cys-92, Cys-112, and Cys-115. N6-acetyllysine is present on Lys-120.

This sequence belongs to the cytochrome c oxidase 5b family. Expressed in testis. Not expressed in brain, heart, liver, kidney, spleen, lung, duodenum, muscle, epididymis, vagina, uterus and ovary.

The protein localises to the mitochondrion inner membrane. Functionally, this protein is one of the nuclear-coded polypeptide chains of cytochrome c oxidase, the terminal oxidase in mitochondrial electron transport. The sequence is that of Cytochrome c oxidase subunit 5B, mitochondrial from Vulpes vulpes (Red fox).